The following is a 495-amino-acid chain: Probable aminotransferase ACS12 (495 aa).

Lysine 334 is modified (N6-(pyridoxal phosphate)lysine).

It belongs to the class-I pyridoxal-phosphate-dependent aminotransferase family. As to quaternary structure, homodimer. Pyridoxal 5'-phosphate is required as a cofactor. Expressed in roots. Expressed at low level in leaves, stems, flowers and siliques.

Probable aminotransferase. Does not have 1-aminocyclopropane-1-carboxylate synthase (ACS) activity, suggesting that it is not involved in ethylene biosynthesis. This chain is Probable aminotransferase ACS12 (ACS12), found in Arabidopsis thaliana (Mouse-ear cress).